Consider the following 233-residue polypeptide: UPF0128 protein MJ1463 (233 aa).

Belongs to the UPF0128 family.

In Methanocaldococcus jannaschii (strain ATCC 43067 / DSM 2661 / JAL-1 / JCM 10045 / NBRC 100440) (Methanococcus jannaschii), this protein is UPF0128 protein MJ1463.